We begin with the raw amino-acid sequence, 178 residues long: Large ribosomal subunit protein uL6 (178 aa).

Belongs to the universal ribosomal protein uL6 family. In terms of assembly, part of the 50S ribosomal subunit.

This protein binds to the 23S rRNA, and is important in its secondary structure. It is located near the subunit interface in the base of the L7/L12 stalk, and near the tRNA binding site of the peptidyltransferase center. This chain is Large ribosomal subunit protein uL6, found in Limosilactobacillus fermentum (strain NBRC 3956 / LMG 18251) (Lactobacillus fermentum).